The chain runs to 365 residues: Glycerol dehydrogenase (365 aa).

Positions 37, 94, 95, 116, and 119 each coordinate NAD(+). D121 is a binding site for glycerol. 3 residues coordinate NAD(+): S125, L127, and Y131. 3 residues coordinate Zn(2+): D171, H254, and H271. Glycerol is bound at residue H254.

This sequence belongs to the iron-containing alcohol dehydrogenase family. Zn(2+) serves as cofactor.

It carries out the reaction glycerol + NAD(+) = dihydroxyacetone + NADH + H(+). Its pathway is polyol metabolism; glycerol fermentation; glycerone phosphate from glycerol (oxidative route): step 1/2. In terms of biological role, catalyzes the NAD-dependent oxidation of glycerol to dihydroxyacetone (glycerone). Allows microorganisms to utilize glycerol as a source of carbon under anaerobic conditions. The protein is Glycerol dehydrogenase (gldA) of Pseudomonas putida (Arthrobacter siderocapsulatus).